The following is a 251-amino-acid chain: Ditrans,polycis-undecaprenyl-diphosphate synthase ((2E,6E)-farnesyl-diphosphate specific) (251 aa).

Residue aspartate 20 is part of the active site. Aspartate 20 is a binding site for Mg(2+). Substrate contacts are provided by residues 21–24, tryptophan 25, arginine 33, histidine 37, and 65–67; these read GNGR and SSE. Residue asparagine 68 is the Proton acceptor of the active site. Residues tryptophan 69, arginine 71, arginine 188, and 194–196 contribute to the substrate site; that span reads RIS. Glutamate 207 provides a ligand contact to Mg(2+).

The protein belongs to the UPP synthase family. In terms of assembly, homodimer. Mg(2+) serves as cofactor.

It catalyses the reaction 8 isopentenyl diphosphate + (2E,6E)-farnesyl diphosphate = di-trans,octa-cis-undecaprenyl diphosphate + 8 diphosphate. In terms of biological role, catalyzes the sequential condensation of isopentenyl diphosphate (IPP) with (2E,6E)-farnesyl diphosphate (E,E-FPP) to yield (2Z,6Z,10Z,14Z,18Z,22Z,26Z,30Z,34E,38E)-undecaprenyl diphosphate (di-trans,octa-cis-UPP). UPP is the precursor of glycosyl carrier lipid in the biosynthesis of bacterial cell wall polysaccharide components such as peptidoglycan and lipopolysaccharide. This chain is Ditrans,polycis-undecaprenyl-diphosphate synthase ((2E,6E)-farnesyl-diphosphate specific), found in Vibrio vulnificus (strain CMCP6).